The primary structure comprises 175 residues: Adenine phosphoribosyltransferase (175 aa).

It belongs to the purine/pyrimidine phosphoribosyltransferase family. In terms of assembly, homodimer.

Its subcellular location is the cytoplasm. It catalyses the reaction AMP + diphosphate = 5-phospho-alpha-D-ribose 1-diphosphate + adenine. It functions in the pathway purine metabolism; AMP biosynthesis via salvage pathway; AMP from adenine: step 1/1. Its function is as follows. Catalyzes a salvage reaction resulting in the formation of AMP, that is energically less costly than de novo synthesis. In Lactobacillus gasseri (strain ATCC 33323 / DSM 20243 / BCRC 14619 / CIP 102991 / JCM 1131 / KCTC 3163 / NCIMB 11718 / NCTC 13722 / AM63), this protein is Adenine phosphoribosyltransferase.